Here is a 160-residue protein sequence, read N- to C-terminus: Arginine repressor (160 aa).

The protein belongs to the ArgR family.

The protein resides in the cytoplasm. Its pathway is amino-acid biosynthesis; L-arginine biosynthesis [regulation]. In terms of biological role, regulates arginine biosynthesis genes. The polypeptide is Arginine repressor (Anaeromyxobacter sp. (strain K)).